The primary structure comprises 378 residues: Anhydro-N-acetylmuramic acid kinase (378 aa).

23-30 is an ATP binding site; the sequence is GTSMDGAD.

The protein belongs to the anhydro-N-acetylmuramic acid kinase family.

The enzyme catalyses 1,6-anhydro-N-acetyl-beta-muramate + ATP + H2O = N-acetyl-D-muramate 6-phosphate + ADP + H(+). Its pathway is amino-sugar metabolism; 1,6-anhydro-N-acetylmuramate degradation. The protein operates within cell wall biogenesis; peptidoglycan recycling. Functionally, catalyzes the specific phosphorylation of 1,6-anhydro-N-acetylmuramic acid (anhMurNAc) with the simultaneous cleavage of the 1,6-anhydro ring, generating MurNAc-6-P. Is required for the utilization of anhMurNAc either imported from the medium or derived from its own cell wall murein, and thus plays a role in cell wall recycling. In Bordetella pertussis (strain Tohama I / ATCC BAA-589 / NCTC 13251), this protein is Anhydro-N-acetylmuramic acid kinase.